A 67-amino-acid chain; its full sequence is Large ribosomal subunit protein uL29 (67 aa).

The protein belongs to the universal ribosomal protein uL29 family.

This is Large ribosomal subunit protein uL29 from Agathobacter rectalis (strain ATCC 33656 / DSM 3377 / JCM 17463 / KCTC 5835 / VPI 0990) (Eubacterium rectale).